We begin with the raw amino-acid sequence, 97 residues long: Apolipoprotein C-II (97 aa).

An N-terminal signal peptide occupies residues 1–22; the sequence is MGSRFFLALFLALLVLGNEVQG. Residues 63–71 are lipid binding; it reads SVDEKLRDM. The lipoprotein lipase cofactor stretch occupies residues 75–97; sequence SSAAMTTYAGIFTDQLLTLLKGE.

It belongs to the apolipoprotein C2 family. In terms of processing, proapolipoprotein C-II is synthesized as a sialic acid containing glycoprotein which is subsequently desialylated prior to its proteolytic processing. Post-translationally, proapolipoprotein C-II, the major form found in plasma undergoes proteolytic cleavage of its N-terminal hexapeptide to generate the mature form apolipoprotein C-II, which occurs as the minor form in plasma.

The protein localises to the secreted. In terms of biological role, component of chylomicrons, very low-density lipoproteins (VLDL), low-density lipoproteins (LDL), and high-density lipoproteins (HDL) in plasma. Plays an important role in lipoprotein metabolism as an activator of lipoprotein lipase. This is Apolipoprotein C-II (Apoc2) from Rattus norvegicus (Rat).